A 343-amino-acid chain; its full sequence is MKALAKLRPEEGIWMVDSPTPELGHNDIMIKIRKSAICGTDVHIYNWDEWSQKTIPVPMVVGHEYVGEIVAIGQEVNGFHIGDRVSGEGHITCGYCRNCRAGRRHLCRNAIGVGVNRPGSFAEYLVIPAYNAFRIPDNISDELAAIFDPFGNAVHTALSFDLVGEDVLIAGAGPIGMMAAAVCRHVGARNVVITDVNAYRLDLARKMGATRAVNVAEERLADVMIELGMTEGFDIGLEMSGAPSAFRAMLKAMNHGGRIAMLGIPHEPMSIDWGEVIFKGLFIKGIYGREMFETWYKMSALIQSGLDLSPIITHRFHIDEFQKGFDAMRSGQSGKVILNWDER.

Zn(2+) is bound at residue cysteine 38. Catalysis depends on charge relay system residues threonine 40 and histidine 43. Zn(2+)-binding residues include histidine 63, glutamate 64, cysteine 93, cysteine 96, cysteine 99, and cysteine 107. Residues isoleucine 175, aspartate 195, arginine 200, 262–264, and 286–287 contribute to the NAD(+) site; these read LGI and IY.

It belongs to the zinc-containing alcohol dehydrogenase family. Homotetramer. The cofactor is Zn(2+).

The protein localises to the cytoplasm. The enzyme catalyses L-threonine + NAD(+) = (2S)-2-amino-3-oxobutanoate + NADH + H(+). It functions in the pathway amino-acid degradation; L-threonine degradation via oxydo-reductase pathway; glycine from L-threonine: step 1/2. In terms of biological role, catalyzes the NAD(+)-dependent oxidation of L-threonine to 2-amino-3-ketobutyrate. This is L-threonine 3-dehydrogenase from Pectobacterium carotovorum subsp. carotovorum (strain PC1).